A 540-amino-acid polypeptide reads, in one-letter code: NADH-quinone oxidoreductase subunit N 1 (540 aa).

Transmembrane regions (helical) follow at residues 11–31 (ILPELMLLLLGLLVLGSDVLT), 52–72 (AVGLGLVFIVGLVQSRFLFTV), 109–129 (FTMIARLTFIGAAFLTTLLAM), 142–162 (ALLIFSTLGMSIMAAATEFIL), 195–215 (FLFGSLSSAIFLYGISLTYGF), 250–270 (LILGMLFIIAGLGYKISVVPF), 284–306 (PVTAFLSTASKAAGFLLLYRLLT), 324–344 (WTSILAILALVTVIVGNLAAL), 352–372 (LLAYSSIGHAGFLLLAVLLWA), 386–406 (LIYYLIVYSLTNLGSFGVLAV), 431–451 (LMMTILILSLAGIPPLAGFWA), 464–486 (AVPLVTIAVIMTVVSLYYYLRFL), and 508–528 (AAIILSTVLVVLLGLLPNLIW).

Belongs to the complex I subunit 2 family. NDH-1 is composed of 14 different subunits. Subunits NuoA, H, J, K, L, M, N constitute the membrane sector of the complex.

The protein localises to the cell membrane. It catalyses the reaction a quinone + NADH + 5 H(+)(in) = a quinol + NAD(+) + 4 H(+)(out). Functionally, NDH-1 shuttles electrons from NADH, via FMN and iron-sulfur (Fe-S) centers, to quinones in the respiratory chain. The immediate electron acceptor for the enzyme in this species is believed to be ubiquinone. Couples the redox reaction to proton translocation (for every two electrons transferred, four hydrogen ions are translocated across the cytoplasmic membrane), and thus conserves the redox energy in a proton gradient. This chain is NADH-quinone oxidoreductase subunit N 1, found in Roseiflexus castenholzii (strain DSM 13941 / HLO8).